The chain runs to 503 residues: Putative cytochrome P450 71A28 (503 aa).

Residues 1 to 21 (MILISLCFTTFLAFLFLNPLL) form a helical membrane-spanning segment. Cys443 is a heme binding site.

This sequence belongs to the cytochrome P450 family. The cofactor is heme.

The protein localises to the membrane. This chain is Putative cytochrome P450 71A28 (CYP71A28), found in Arabidopsis thaliana (Mouse-ear cress).